The following is a 495-amino-acid chain: Membrane-bound lytic murein transglycosylase F (495 aa).

Positions 1–29 (MEIRKLSLSTIRSIITSLSVLVLVISASA) are cleaved as a signal peptide. The segment at 30–273 (TLVRSTPPNV…VTKHFFERHI (244 aa)) is non-LT domain. The LT domain stretch occupies residues 274–495 (DEVTTGEAMV…TAAQGENLSL (222 aa)). The active site involves E320.

The protein in the N-terminal section; belongs to the bacterial solute-binding protein 3 family. It in the C-terminal section; belongs to the transglycosylase Slt family.

It localises to the cell outer membrane. It carries out the reaction Exolytic cleavage of the (1-&gt;4)-beta-glycosidic linkage between N-acetylmuramic acid (MurNAc) and N-acetylglucosamine (GlcNAc) residues in peptidoglycan, from either the reducing or the non-reducing ends of the peptidoglycan chains, with concomitant formation of a 1,6-anhydrobond in the MurNAc residue.. In terms of biological role, murein-degrading enzyme that degrades murein glycan strands and insoluble, high-molecular weight murein sacculi, with the concomitant formation of a 1,6-anhydromuramoyl product. Lytic transglycosylases (LTs) play an integral role in the metabolism of the peptidoglycan (PG) sacculus. Their lytic action creates space within the PG sacculus to allow for its expansion as well as for the insertion of various structures such as secretion systems and flagella. The sequence is that of Membrane-bound lytic murein transglycosylase F from Cellvibrio japonicus (strain Ueda107) (Pseudomonas fluorescens subsp. cellulosa).